Consider the following 264-residue polypeptide: MPRSCCSRSGALLLALLLQASMEVRGWCLESSQCQDLTTESNLLECIRACKPDLSAETPVFPGNGDEQPLTENPRKYVMGHFRWDRFGRRNSSSGSAHQKREDVAAGEDRGLLPEGGPEPRGDGAGPGPREGKRSYSMEHFRWGKPVGKKRRPVKVYPNGAEDESAEAFPLEFKRELTGQRPRAGDGPDGPADDGAGPRADLEHSLLVAAEKKDEGPYRMEHFRWGSPPKDKRYGGFMTSEKSQTPLVTLFKNAIIKNAYKKGQ.

Residues 1-26 form the signal peptide; that stretch reads MPRSCCSRSGALLLALLLQASMEVRG. F87 carries the post-translational modification Phenylalanine amide. Disordered regions lie at residues 88–204 and 219–238; these read GRRN…DLEH and RMEHFRWGSPPKDKRYGGFM. N-linked (GlcNAc...) asparagine glycosylation is present at N91. 2 stretches are compositionally biased toward basic and acidic residues: residues 99–122 and 130–142; these read QKREDVAAGEDRGLLPEGGPEPRG and REGKRSYSMEHFR. Position 131 is a glutamic acid 1-amide (E131). S135 bears the N-acetylserine; in Corticotropin mark. V147 carries the valine amide modification. A Phosphoserine modification is found at S165. Residues 172–186 show a composition bias toward basic and acidic residues; that stretch reads EFKRELTGQRPRAGD. Low complexity predominate over residues 189–199; the sequence is DGPADDGAGPR. Positions 219-234 are enriched in basic and acidic residues; sequence RMEHFRWGSPPKDKRY.

The protein belongs to the POMC family. Specific enzymatic cleavages at paired basic residues yield the different active peptides. ACTH and MSH are produced by the pituitary gland.

It is found in the secreted. Stimulates the adrenal glands to release cortisol. In terms of biological role, anorexigenic peptide. Increases the pigmentation of skin by increasing melanin production in melanocytes. Its function is as follows. Increases the pigmentation of skin by increasing melanin production in melanocytes. Functionally, endogenous orexigenic opiate. Endogenous opiate. The polypeptide is Pro-opiomelanocortin (POMC) (Macaca nemestrina (Pig-tailed macaque)).